We begin with the raw amino-acid sequence, 246 residues long: Probable transcriptional regulatory protein YebC (246 aa).

The tract at residues 1–20 (MAGHSKWANTRHRKAAQDAK) is disordered.

This sequence belongs to the TACO1 family.

It localises to the cytoplasm. The sequence is that of Probable transcriptional regulatory protein YebC from Shigella boydii serotype 4 (strain Sb227).